We begin with the raw amino-acid sequence, 142 residues long: Neuritin (142 aa).

The first 27 residues, 1 to 27 (MGLKLNGRYISLILAVQIAYLVQAVRA), serve as a signal peptide directing secretion. Gly116 carries the GPI-anchor amidated glycine lipid modification. A propeptide spans 117-142 (AAGPLLPALPVLLVSLSAALATWLSF) (removed in mature form).

This sequence belongs to the neuritin family. Component of the outer core of AMPAR complex. AMPAR complex consists of an inner core made of 4 pore-forming GluA/GRIA proteins (GRIA1, GRIA2, GRIA3 and GRIA4) and 4 major auxiliary subunits arranged in a twofold symmetry. One of the two pairs of distinct binding sites is occupied either by CNIH2, CNIH3 or CACNG2, CACNG3. The other harbors CACNG2, CACNG3, CACNG4, CACNG8 or GSG1L. This inner core of AMPAR complex is complemented by outer core constituents binding directly to the GluA/GRIA proteins at sites distinct from the interaction sites of the inner core constituents. Outer core constituents include at least PRRT1, PRRT2, CKAMP44/SHISA9, FRRS1L and NRN1. The proteins of the inner and outer core serve as a platform for other, more peripherally associated AMPAR constituents. Alone or in combination, these auxiliary subunits control the gating and pharmacology of the AMPAR complex and profoundly impact their biogenesis and protein processing.

It localises to the cell membrane. The protein resides in the synapse. Promotes neurite outgrowth and especially branching of neuritic processes in primary hippocampal and cortical cells. This chain is Neuritin (NRN1), found in Bos taurus (Bovine).